A 211-amino-acid polypeptide reads, in one-letter code: ATP phosphoribosyltransferase (211 aa).

The protein belongs to the ATP phosphoribosyltransferase family. Short subfamily. As to quaternary structure, heteromultimer composed of HisG and HisZ subunits.

It is found in the cytoplasm. It carries out the reaction 1-(5-phospho-beta-D-ribosyl)-ATP + diphosphate = 5-phospho-alpha-D-ribose 1-diphosphate + ATP. It functions in the pathway amino-acid biosynthesis; L-histidine biosynthesis; L-histidine from 5-phospho-alpha-D-ribose 1-diphosphate: step 1/9. Its function is as follows. Catalyzes the condensation of ATP and 5-phosphoribose 1-diphosphate to form N'-(5'-phosphoribosyl)-ATP (PR-ATP). Has a crucial role in the pathway because the rate of histidine biosynthesis seems to be controlled primarily by regulation of HisG enzymatic activity. The sequence is that of ATP phosphoribosyltransferase from Bacillus cereus (strain 03BB102).